Reading from the N-terminus, the 90-residue chain is U7-theraphotoxin-Hhn1h (90 aa).

A signal peptide spans 1–19 (MKTAIFTVVLALAVFAVLS). Positions 20 to 50 (FGWEANEKALSEEFTELIHEKEAASETEARE) are excised as a propeptide. 3 disulfides stabilise this stretch: Cys-51–Cys-65, Cys-58–Cys-70, and Cys-64–Cys-81.

It belongs to the neurotoxin 10 (Hwtx-1) family. 13 (Hntx-13) subfamily. In terms of tissue distribution, expressed by the venom gland.

It localises to the secreted. Functionally, ion channel inhibitor. The chain is U7-theraphotoxin-Hhn1h from Cyriopagopus hainanus (Chinese bird spider).